The sequence spans 495 residues: Probable cytosol aminopeptidase (495 aa).

Mn(2+) contacts are provided by K266 and D271. K278 is a catalytic residue. Mn(2+) is bound by residues D289, D348, and E350. Residue R352 is part of the active site.

The protein belongs to the peptidase M17 family. Mn(2+) serves as cofactor.

Its subcellular location is the cytoplasm. The enzyme catalyses Release of an N-terminal amino acid, Xaa-|-Yaa-, in which Xaa is preferably Leu, but may be other amino acids including Pro although not Arg or Lys, and Yaa may be Pro. Amino acid amides and methyl esters are also readily hydrolyzed, but rates on arylamides are exceedingly low.. It carries out the reaction Release of an N-terminal amino acid, preferentially leucine, but not glutamic or aspartic acids.. Presumably involved in the processing and regular turnover of intracellular proteins. Catalyzes the removal of unsubstituted N-terminal amino acids from various peptides. In Pseudomonas aeruginosa (strain LESB58), this protein is Probable cytosol aminopeptidase.